Here is a 313-residue protein sequence, read N- to C-terminus: Biotin synthase (313 aa).

In terms of domain architecture, Radical SAM core spans 28-258; the sequence is NFGNDIELCS…LFPQARLRLS (231 aa). Residues Cys-46, Cys-50, and Cys-53 each contribute to the [4Fe-4S] cluster site. Positions 90, 121, 181, and 256 each coordinate [2Fe-2S] cluster.

It belongs to the radical SAM superfamily. Biotin synthase family. In terms of assembly, homodimer. It depends on [4Fe-4S] cluster as a cofactor. The cofactor is [2Fe-2S] cluster.

The enzyme catalyses (4R,5S)-dethiobiotin + (sulfur carrier)-SH + 2 reduced [2Fe-2S]-[ferredoxin] + 2 S-adenosyl-L-methionine = (sulfur carrier)-H + biotin + 2 5'-deoxyadenosine + 2 L-methionine + 2 oxidized [2Fe-2S]-[ferredoxin]. Its pathway is cofactor biosynthesis; biotin biosynthesis; biotin from 7,8-diaminononanoate: step 2/2. Catalyzes the conversion of dethiobiotin (DTB) to biotin by the insertion of a sulfur atom into dethiobiotin via a radical-based mechanism. This is Biotin synthase from Francisella tularensis subsp. tularensis (strain WY96-3418).